Consider the following 132-residue polypeptide: Ribonuclease P protein component (132 aa).

This sequence belongs to the RnpA family. As to quaternary structure, consists of a catalytic RNA component (M1 or rnpB) and a protein subunit.

The catalysed reaction is Endonucleolytic cleavage of RNA, removing 5'-extranucleotides from tRNA precursor.. Functionally, RNaseP catalyzes the removal of the 5'-leader sequence from pre-tRNA to produce the mature 5'-terminus. It can also cleave other RNA substrates such as 4.5S RNA. The protein component plays an auxiliary but essential role in vivo by binding to the 5'-leader sequence and broadening the substrate specificity of the ribozyme. This chain is Ribonuclease P protein component, found in Marinomonas sp. (strain MWYL1).